A 273-amino-acid chain; its full sequence is 3-methyl-2-oxobutanoate hydroxymethyltransferase (273 aa).

Positions 53 and 92 each coordinate Mg(2+). Residues 53 to 54 (DS), Asp92, and Lys122 contribute to the 3-methyl-2-oxobutanoate site. A Mg(2+)-binding site is contributed by Glu124. Catalysis depends on Glu191, which acts as the Proton acceptor.

This sequence belongs to the PanB family. Homodecamer; pentamer of dimers. Mg(2+) serves as cofactor.

The protein resides in the cytoplasm. It carries out the reaction 3-methyl-2-oxobutanoate + (6R)-5,10-methylene-5,6,7,8-tetrahydrofolate + H2O = 2-dehydropantoate + (6S)-5,6,7,8-tetrahydrofolate. The protein operates within cofactor biosynthesis; (R)-pantothenate biosynthesis; (R)-pantoate from 3-methyl-2-oxobutanoate: step 1/2. In terms of biological role, catalyzes the reversible reaction in which hydroxymethyl group from 5,10-methylenetetrahydrofolate is transferred onto alpha-ketoisovalerate to form ketopantoate. The chain is 3-methyl-2-oxobutanoate hydroxymethyltransferase from Bacteroides fragilis (strain ATCC 25285 / DSM 2151 / CCUG 4856 / JCM 11019 / LMG 10263 / NCTC 9343 / Onslow / VPI 2553 / EN-2).